The chain runs to 131 residues: Holo-[acyl-carrier-protein] synthase (131 aa).

Positions 8 and 62 each coordinate Mg(2+).

The protein belongs to the P-Pant transferase superfamily. AcpS family. It depends on Mg(2+) as a cofactor.

The protein resides in the cytoplasm. It carries out the reaction apo-[ACP] + CoA = holo-[ACP] + adenosine 3',5'-bisphosphate + H(+). In terms of biological role, transfers the 4'-phosphopantetheine moiety from coenzyme A to a Ser of acyl-carrier-protein. The sequence is that of Holo-[acyl-carrier-protein] synthase from Delftia acidovorans (strain DSM 14801 / SPH-1).